The sequence spans 156 residues: Snaclec A15 (156 aa).

Residues 1–23 (MGRFIFVRFGLLVVFLSLSGTGA) form the signal peptide. Intrachain disulfides connect Cys27/Cys38, Cys55/Cys152, and Cys127/Cys144. The C-type lectin domain occupies 34–153 (YDQHCYKAFD…CGDDYPFVCK (120 aa)). Asn141 carries an N-linked (GlcNAc...) asparagine glycan.

It belongs to the snaclec family. Heterodimer; disulfide-linked. In terms of tissue distribution, expressed by the venom gland.

The protein localises to the secreted. Functionally, interferes with one step of hemostasis (modulation of platelet aggregation, or coagulation cascade, for example). The polypeptide is Snaclec A15 (Macrovipera lebetinus (Levantine viper)).